We begin with the raw amino-acid sequence, 176 residues long: NAD(P)H-quinone oxidoreductase subunit 6, chloroplastic (176 aa).

Helical transmembrane passes span 10–30, 33–53, 60–80, 95–115, and 152–172; these read ILVLFGGFVLLLGGLGVVLLT, IYSAFSLGLVLVCISLFYFLL, VAQLLIYVGAINVLIIFAVMF, IGDGFTLLLCITIPFSLMTTI, and FYLPFELISLILLVSLIGAIT.

The protein belongs to the complex I subunit 6 family. In terms of assembly, NDH is composed of at least 16 different subunits, 5 of which are encoded in the nucleus.

The protein localises to the plastid. Its subcellular location is the chloroplast thylakoid membrane. The enzyme catalyses a plastoquinone + NADH + (n+1) H(+)(in) = a plastoquinol + NAD(+) + n H(+)(out). The catalysed reaction is a plastoquinone + NADPH + (n+1) H(+)(in) = a plastoquinol + NADP(+) + n H(+)(out). Its function is as follows. NDH shuttles electrons from NAD(P)H:plastoquinone, via FMN and iron-sulfur (Fe-S) centers, to quinones in the photosynthetic chain and possibly in a chloroplast respiratory chain. The immediate electron acceptor for the enzyme in this species is believed to be plastoquinone. Couples the redox reaction to proton translocation, and thus conserves the redox energy in a proton gradient. In Saccharum hybrid (Sugarcane), this protein is NAD(P)H-quinone oxidoreductase subunit 6, chloroplastic (ndhG).